Consider the following 356-residue polypeptide: Tyrosine recombinase XerS (356 aa).

Positions 16-121 (LMPWYVLEYY…ALSSLYKYLT (106 aa)) constitute a Core-binding (CB) domain. Residues 169 to 354 (GFLTYIDQEH…VSDEQKNALD (186 aa)) form the Tyr recombinase domain. Catalysis depends on residues Arg-210, Lys-234, His-306, Arg-309, and His-332. The active-site O-(3'-phospho-DNA)-tyrosine intermediate is the Tyr-341.

It belongs to the 'phage' integrase family. XerS subfamily.

The protein localises to the cytoplasm. FtsK is required for recombination. Functionally, site-specific tyrosine recombinase, which acts by catalyzing the cutting and rejoining of the recombining DNA molecules. Essential to convert dimers of the bacterial chromosome into monomers to permit their segregation at cell division. This chain is Tyrosine recombinase XerS, found in Streptococcus pneumoniae (strain 70585).